Reading from the N-terminus, the 476-residue chain is Ureidoglycolate hydrolase (476 aa).

The signal sequence occupies residues 1–25; the sequence is MESLKRFLCSIALLLISLLLPSSLA. Mn(2+) is bound by residues His-138, Asp-149, Glu-184, and His-254. Substrate is bound by residues 183-184, 254-257, His-290, Asn-340, Arg-353, 423-424, and His-448; these read EE, HIEQ, and YH. An involved in dimerization region spans residues 276–391; sequence APASLKVEFE…LSEFKIVNQD (116 aa). His-448 is a Mn(2+) binding site.

The protein belongs to the peptidase M20 family. In terms of assembly, homodimer. The cofactor is Mn(2+). Requires Ni(2+) as cofactor. It depends on Co(2+) as a cofactor.

The protein resides in the endoplasmic reticulum. It catalyses the reaction (S)-ureidoglycolate + H2O + 2 H(+) = glyoxylate + 2 NH4(+) + CO2. The protein operates within nitrogen metabolism; (S)-allantoin degradation; glyoxylate from (S)-ureidoglycolate: step 1/1. In terms of biological role, involved in the catabolism of purine nucleotides. Can use (S)-ureidoglycolate as substrate, but not (R)-ureidoglycolate or allantoate. The sequential activity of AAH, UGLYAH and UAH allows a complete purine breakdown without the intermediate generation of urea. In Arabidopsis thaliana (Mouse-ear cress), this protein is Ureidoglycolate hydrolase.